The sequence spans 686 residues: ATP-dependent zinc metalloprotease FtsH 2 (686 aa).

The Cytoplasmic segment spans residues 1–11 (MKKNIKDIFKN). Residues 12–32 (FNIFWFCFIFLLLSLLYCLIM) form a helical membrane-spanning segment. Topologically, residues 33–178 (MEISHQHDNN…LQRIPYQPYF (146 aa)) are extracellular. The chain crosses the membrane as a helical span at residues 179–199 (GFAPFISAVNICILIIIFYFI). Residues 200-686 (YNSIEKTSAQ…QKSEKEDCNK (487 aa)) are Cytoplasmic-facing. Residue 272–279 (GPPGVGKT) participates in ATP binding. His-493 serves as a coordination point for Zn(2+). Residue Glu-494 is part of the active site. Zn(2+)-binding residues include His-497 and Asp-569.

It in the central section; belongs to the AAA ATPase family. In the C-terminal section; belongs to the peptidase M41 family. Homohexamer. Zn(2+) serves as cofactor.

Its subcellular location is the cell membrane. Functionally, acts as a processive, ATP-dependent zinc metallopeptidase for both cytoplasmic and membrane proteins. Plays a role in the quality control of integral membrane proteins. This is ATP-dependent zinc metalloprotease FtsH 2 from Phytoplasma mali (strain AT).